The chain runs to 49 residues: Peridinin-chlorophyll a-binding protein (49 aa).

Monomer. Binds 12 peridinin and 2 chlorophyll a molecules per monomer.

The protein localises to the plastid. It localises to the chloroplast. Functionally, water-soluble antenna for capture of solar energy in the blue-green range. Peridinin is an asymmetric carotenoid. The polypeptide is Peridinin-chlorophyll a-binding protein (Alexandrium cohorticula (Dinoflagellate)).